Here is a 327-residue protein sequence, read N- to C-terminus: Aspartate--ammonia ligase (327 aa).

The protein belongs to the class-II aminoacyl-tRNA synthetase family. AsnA subfamily.

The protein resides in the cytoplasm. The catalysed reaction is L-aspartate + NH4(+) + ATP = L-asparagine + AMP + diphosphate + H(+). Its pathway is amino-acid biosynthesis; L-asparagine biosynthesis; L-asparagine from L-aspartate (ammonia route): step 1/1. The polypeptide is Aspartate--ammonia ligase (Bacillus cereus (strain AH820)).